The primary structure comprises 746 residues: Taurocyamine kinase (746 aa).

Approximate repeat units follow at residues 31 to 393 and 394 to 705; these read MQVE…PEGV and MPVE…YGEH. The Phosphagen kinase N-terminal 1 domain maps to 35-116; the sequence is SLQNLQAKIR…FDAVIADYHK (82 aa). One can recognise a Phosphagen kinase C-terminal 1 domain in the interval 146–382; sequence LVVSTRVRLG…RALLELEVML (237 aa). ATP contacts are provided by residues 149–153, His-212, and Arg-256; that span reads STRVR. The active site involves Cys-298. Residues 307 to 311 and 335 to 340 contribute to the ATP site; these read RASVH and RGTHGE. Residues 398–479 enclose the Phosphagen kinase N-terminal 2 domain; that stretch reads PLTYLAKLLE…LDPLICDYHG (82 aa). Residues 509–746 enclose the Phosphagen kinase C-terminal 2 domain; that stretch reads FIVSTRVRVG…AKMIEIEKGL (238 aa). ATP-binding positions include 512–516, His-575, and Arg-619; that span reads STRVR. Cys-661 is a catalytic residue. Residues 670 to 674 and 699 to 704 each bind ATP; these read RASVL and RGLYGE.

This sequence belongs to the ATP:guanido phosphotransferase family. The cofactor is Mg(2+).

The catalysed reaction is taurocyamine + ATP = N-phosphotaurocyamine + ADP + H(+). In terms of biological role, this family of enzymes reversibly catalyzes the transfer of phosphate between ATP and various phosphogens (e.g. creatine phosphate). The polypeptide is Taurocyamine kinase (Schistosoma mansoni (Blood fluke)).